Here is a 146-residue protein sequence, read N- to C-terminus: uncharacterized protein (146 aa).

Residues 31 to 119 form the Toprim domain; sequence EKVMIVEGKS…RAYKEVAAAP (89 aa).

This is an uncharacterized protein from Bacillus subtilis (strain 168).